The primary structure comprises 428 residues: Maltoporin (428 aa).

An N-terminal signal peptide occupies residues 1-24 (MTTLRKLPIALAVAAGVLSTQAMA).

It belongs to the porin LamB (TC 1.B.3) family. Homotrimer formed of three 18-stranded antiparallel beta-barrels, containing three independent channels.

The protein localises to the cell outer membrane. The enzyme catalyses beta-maltose(in) = beta-maltose(out). In terms of biological role, involved in the transport of maltose and maltodextrins. The protein is Maltoporin of Yersinia enterocolitica serotype O:8 / biotype 1B (strain NCTC 13174 / 8081).